A 432-amino-acid chain; its full sequence is Adenylosuccinate synthetase (432 aa).

GTP is bound by residues 12-18 and 40-42; these read GDEGKGK and GHT. Asp-13 (proton acceptor) is an active-site residue. Positions 13 and 40 each coordinate Mg(2+). Residues 13–16, 38–41, Thr-128, Arg-142, Gln-223, Thr-238, and Arg-302 contribute to the IMP site; these read DEGK and NAGH. His-41 serves as the catalytic Proton donor. Position 298-304 (298-304) interacts with substrate; that stretch reads TTTGRPR. GTP is bound by residues Arg-304, 330 to 332, and 417 to 419; these read HLD and GVG.

It belongs to the adenylosuccinate synthetase family. As to quaternary structure, homodimer. It depends on Mg(2+) as a cofactor.

The protein resides in the cytoplasm. It catalyses the reaction IMP + L-aspartate + GTP = N(6)-(1,2-dicarboxyethyl)-AMP + GDP + phosphate + 2 H(+). It participates in purine metabolism; AMP biosynthesis via de novo pathway; AMP from IMP: step 1/2. Plays an important role in the de novo pathway of purine nucleotide biosynthesis. Catalyzes the first committed step in the biosynthesis of AMP from IMP. This chain is Adenylosuccinate synthetase, found in Symbiobacterium thermophilum (strain DSM 24528 / JCM 14929 / IAM 14863 / T).